A 139-amino-acid chain; its full sequence is Nucleoside diphosphate kinase (139 aa).

ATP-binding residues include K10, F58, R86, T92, R103, and N113. The Pros-phosphohistidine intermediate role is filled by H116.

This sequence belongs to the NDK family. Homotetramer. Requires Mg(2+) as cofactor.

Its subcellular location is the cytoplasm. The enzyme catalyses a 2'-deoxyribonucleoside 5'-diphosphate + ATP = a 2'-deoxyribonucleoside 5'-triphosphate + ADP. It catalyses the reaction a ribonucleoside 5'-diphosphate + ATP = a ribonucleoside 5'-triphosphate + ADP. Functionally, major role in the synthesis of nucleoside triphosphates other than ATP. The ATP gamma phosphate is transferred to the NDP beta phosphate via a ping-pong mechanism, using a phosphorylated active-site intermediate. The chain is Nucleoside diphosphate kinase from Nitratidesulfovibrio vulgaris (strain DSM 19637 / Miyazaki F) (Desulfovibrio vulgaris).